Here is a 245-residue protein sequence, read N- to C-terminus: 1-(5-phosphoribosyl)-5-[(5-phosphoribosylamino)methylideneamino] imidazole-4-carboxamide isomerase (245 aa).

Asp8 (proton acceptor) is an active-site residue. Asp130 (proton donor) is an active-site residue.

The protein belongs to the HisA/HisF family.

It localises to the cytoplasm. It catalyses the reaction 1-(5-phospho-beta-D-ribosyl)-5-[(5-phospho-beta-D-ribosylamino)methylideneamino]imidazole-4-carboxamide = 5-[(5-phospho-1-deoxy-D-ribulos-1-ylimino)methylamino]-1-(5-phospho-beta-D-ribosyl)imidazole-4-carboxamide. It participates in amino-acid biosynthesis; L-histidine biosynthesis; L-histidine from 5-phospho-alpha-D-ribose 1-diphosphate: step 4/9. In Pseudomonas putida (strain W619), this protein is 1-(5-phosphoribosyl)-5-[(5-phosphoribosylamino)methylideneamino] imidazole-4-carboxamide isomerase.